The primary structure comprises 158 residues: Placenta growth factor (158 aa).

Positions 1–23 (MLAMKLFTCFLQVLAGLAVHSQG) form a signal peptide, or 26. N-linked (GlcNAc...) asparagine glycosylation is found at N29 and N30. Intrachain disulfides connect C48-C90, C79-C125, and C83-C127. Residue N97 is glycosylated (N-linked (GlcNAc...) asparagine). The segment at 136–158 (AERRKTKGKRKQSKTPQTEEPHL) is disordered. The span at 137-148 (ERRKTKGKRKQS) shows a compositional bias: basic residues.

The protein belongs to the PDGF/VEGF growth factor family. As to quaternary structure, antiparallel homodimer; disulfide-linked. Also found as heterodimer with VEGFA/VEGF.

The protein resides in the secreted. Functionally, growth factor active in angiogenesis and endothelial cell growth, stimulating their proliferation and migration. It binds to the receptor FLT1/VEGFR-1. Also promotes cell tumor growth. This Rattus norvegicus (Rat) protein is Placenta growth factor (Pgf).